The sequence spans 99 residues: Meromycolate extension acyl carrier protein (99 aa).

One can recognise a Carrier domain in the interval 3-81 (ATQEEIIAGL…DVVAYIQKLE (79 aa)). Ser41 is modified (O-(pantetheine 4'-phosphoryl)serine). An Isoglutamyl lysine isopeptide (Lys-Gln) (interchain with Q-Cter in protein Pup) cross-link involves residue Lys79.

The protein belongs to the acyl carrier protein (ACP) family. In terms of processing, 4'-phosphopantetheine is transferred from CoA to a specific serine of apo-AcpM.

It localises to the cytoplasm. In terms of biological role, acyl carrier protein involved in meromycolate extension. The polypeptide is Meromycolate extension acyl carrier protein (acpM) (Mycolicibacterium smegmatis (strain ATCC 700084 / mc(2)155) (Mycobacterium smegmatis)).